The chain runs to 847 residues: Beta-galactosidase 1 (847 aa).

The signal sequence occupies residues 1-32 (MGSKPNAMKNVVAMAAVSALFLLGFLVCSVSG). Catalysis depends on glutamate 190, which acts as the Proton donor. Glutamate 259 serves as the catalytic Nucleophile. Asparagine 469 carries an N-linked (GlcNAc...) asparagine glycan. Residues 761–847 (KPLHPKAHLQ…KKLAVEAVCA (87 aa)) form the SUEL-type lectin domain.

It belongs to the glycosyl hydrolase 35 family. In terms of tissue distribution, ubiquitous, at low levels.

It localises to the secreted. Its subcellular location is the extracellular space. The protein localises to the apoplast. It carries out the reaction Hydrolysis of terminal non-reducing beta-D-galactose residues in beta-D-galactosides.. The protein is Beta-galactosidase 1 (BGAL1) of Arabidopsis thaliana (Mouse-ear cress).